We begin with the raw amino-acid sequence, 700 residues long: DNA topoisomerase 1 (700 aa).

Positions 3-114 (KNLIIVESPA…TLPRIVFHEI (112 aa)) constitute a Toprim domain. The Mg(2+) site is built by Glu-9 and Asp-83. In terms of domain architecture, Topo IA-type catalytic spans 130–553 (NMHSVNAQQT…EFYYPFMRKI (424 aa)). Positions 164–169 (SAGRVQ) are interaction with DNA. Tyr-298 acts as the O-(5'-phospho-DNA)-tyrosine intermediate in catalysis. 3 consecutive C4-type zinc fingers follow at residues 573–599 (CPDCGGELAIRKGRFGEFVACLNFPKC), 629–656 (CPSCQKGEIVERFSKRGKFYGCSAYPKC), and 669–692 (CEECGETLVIKELKKGTFLECLKC).

This sequence belongs to the type IA topoisomerase family. In terms of assembly, monomer. Mg(2+) serves as cofactor.

It catalyses the reaction ATP-independent breakage of single-stranded DNA, followed by passage and rejoining.. Its function is as follows. Releases the supercoiling and torsional tension of DNA, which is introduced during the DNA replication and transcription, by transiently cleaving and rejoining one strand of the DNA duplex. Introduces a single-strand break via transesterification at a target site in duplex DNA. The scissile phosphodiester is attacked by the catalytic tyrosine of the enzyme, resulting in the formation of a DNA-(5'-phosphotyrosyl)-enzyme intermediate and the expulsion of a 3'-OH DNA strand. The free DNA strand then undergoes passage around the unbroken strand, thus removing DNA supercoils. Finally, in the religation step, the DNA 3'-OH attacks the covalent intermediate to expel the active-site tyrosine and restore the DNA phosphodiester backbone. This is DNA topoisomerase 1 from Campylobacter jejuni subsp. jejuni serotype O:2 (strain ATCC 700819 / NCTC 11168).